A 400-amino-acid polypeptide reads, in one-letter code: Subtilisin-like protease 7 (400 aa).

A signal peptide spans 1–20 (MGFITKAIPLALAAMSVVNG). Positions 21-119 (AEILETRAGV…IERDARVQIN (99 aa)) are excised as a propeptide. One can recognise an Inhibitor I9 domain in the interval 36 to 118 (KYIVIMNDGV…YIERDARVQI (83 aa)). One can recognise a Peptidase S8 domain in the interval 129-400 (SWGLARVGSR…GKLINNGSGK (272 aa)). Active-site charge relay system residues include D161 and H192. N-linked (GlcNAc...) asparagine glycosylation is found at N222 and N252. S346 functions as the Charge relay system in the catalytic mechanism. N396 carries an N-linked (GlcNAc...) asparagine glycan.

Belongs to the peptidase S8 family.

Its subcellular location is the secreted. Its function is as follows. Secreted subtilisin-like serine protease with keratinolytic activity that contributes to pathogenicity. The sequence is that of Subtilisin-like protease 7 (SUB7) from Arthroderma otae (strain ATCC MYA-4605 / CBS 113480) (Microsporum canis).